The sequence spans 442 residues: 3-phosphoshikimate 1-carboxyvinyltransferase (442 aa).

3-phosphoshikimate is bound by residues Lys25, Ser26, and Arg30. Lys25 contacts phosphoenolpyruvate. Phosphoenolpyruvate-binding residues include Gly96 and Arg124. Residues Ser171, Ser172, Gln173, Ser203, Asp325, and Lys352 each contribute to the 3-phosphoshikimate site. Gln173 provides a ligand contact to phosphoenolpyruvate. Asp325 functions as the Proton acceptor in the catalytic mechanism. Phosphoenolpyruvate is bound by residues Arg356, Arg400, and Lys425.

Belongs to the EPSP synthase family. In terms of assembly, monomer.

The protein resides in the cytoplasm. The enzyme catalyses 3-phosphoshikimate + phosphoenolpyruvate = 5-O-(1-carboxyvinyl)-3-phosphoshikimate + phosphate. It functions in the pathway metabolic intermediate biosynthesis; chorismate biosynthesis; chorismate from D-erythrose 4-phosphate and phosphoenolpyruvate: step 6/7. Catalyzes the transfer of the enolpyruvyl moiety of phosphoenolpyruvate (PEP) to the 5-hydroxyl of shikimate-3-phosphate (S3P) to produce enolpyruvyl shikimate-3-phosphate and inorganic phosphate. The sequence is that of 3-phosphoshikimate 1-carboxyvinyltransferase from Bordetella bronchiseptica (strain ATCC BAA-588 / NCTC 13252 / RB50) (Alcaligenes bronchisepticus).